The chain runs to 55 residues: Large ribosomal subunit protein bL33 (55 aa).

It belongs to the bacterial ribosomal protein bL33 family.

The sequence is that of Large ribosomal subunit protein bL33 (rpmG) from Buchnera aphidicola subsp. Acyrthosiphon pisum (strain APS) (Acyrthosiphon pisum symbiotic bacterium).